Here is a 122-residue protein sequence, read N- to C-terminus: Large ribosomal subunit protein uL14 (122 aa).

The protein belongs to the universal ribosomal protein uL14 family. Part of the 50S ribosomal subunit. Forms a cluster with proteins L3 and L19. In the 70S ribosome, L14 and L19 interact and together make contacts with the 16S rRNA in bridges B5 and B8.

Its function is as follows. Binds to 23S rRNA. Forms part of two intersubunit bridges in the 70S ribosome. The polypeptide is Large ribosomal subunit protein uL14 (Stenotrophomonas maltophilia (strain R551-3)).